Reading from the N-terminus, the 154-residue chain is Spore-associated protein A (154 aa).

The first 33 residues, 1 to 33 (MQAVGATLTAVGAIGAGLLVTAPAAGAATAGAT), serve as a signal peptide directing secretion.

Its subcellular location is the spore wall. The polypeptide is Spore-associated protein A (Streptomyces coelicolor (strain ATCC BAA-471 / A3(2) / M145)).